A 207-amino-acid chain; its full sequence is LexA repressor (207 aa).

The segment at residues 28 to 48 (VREIGEAVGLASSSTVHGHLA) is a DNA-binding region (H-T-H motif). Residues serine 129 and lysine 167 each act as for autocatalytic cleavage activity in the active site.

The protein belongs to the peptidase S24 family. In terms of assembly, homodimer.

It carries out the reaction Hydrolysis of Ala-|-Gly bond in repressor LexA.. In terms of biological role, represses a number of genes involved in the response to DNA damage (SOS response), including recA and lexA. In the presence of single-stranded DNA, RecA interacts with LexA causing an autocatalytic cleavage which disrupts the DNA-binding part of LexA, leading to derepression of the SOS regulon and eventually DNA repair. The protein is LexA repressor of Brevibacillus brevis (strain 47 / JCM 6285 / NBRC 100599).